We begin with the raw amino-acid sequence, 327 residues long: Pectate lyase A (327 aa).

An N-terminal signal peptide occupies residues M1–A19. The N-linked (GlcNAc...) asparagine glycan is linked to N99. Positions 140, 169, and 173 each coordinate Ca(2+). The active site involves R226.

It belongs to the polysaccharide lyase 1 family. Requires Ca(2+) as cofactor.

The protein localises to the secreted. The catalysed reaction is Eliminative cleavage of (1-&gt;4)-alpha-D-galacturonan to give oligosaccharides with 4-deoxy-alpha-D-galact-4-enuronosyl groups at their non-reducing ends.. Functionally, pectinolytic enzyme consist of four classes of enzymes: pectin lyase, polygalacturonase, pectin methylesterase and rhamnogalacturonase. Among pectinolytic enzymes, pectin lyase is the most important in depolymerization of pectin, since it cleaves internal glycosidic bonds of highly methylated pectins. Favors pectate, the anion, over pectin, the methyl ester. This is Pectate lyase A (plyA) from Emericella nidulans (strain FGSC A4 / ATCC 38163 / CBS 112.46 / NRRL 194 / M139) (Aspergillus nidulans).